The sequence spans 1120 residues: Transcription-repair-coupling factor (1120 aa).

Positions 591 to 756 (DLTNGMLMDR…LTGLKELSII (166 aa)) constitute a Helicase ATP-binding domain. Residue 604–611 (GDVGFGKT) coordinates ATP. The DEEQ box motif lies at 709–712 (DEEQ). The Helicase C-terminal domain maps to 777-933 (IIRDALLREH…TIASHDADLR (157 aa)).

This sequence in the N-terminal section; belongs to the UvrB family. The protein in the C-terminal section; belongs to the helicase family. RecG subfamily.

The protein localises to the cytoplasm. Functionally, couples transcription and DNA repair by recognizing RNA polymerase (RNAP) stalled at DNA lesions. Mediates ATP-dependent release of RNAP and its truncated transcript from the DNA, and recruitment of nucleotide excision repair machinery to the damaged site. This chain is Transcription-repair-coupling factor, found in Rickettsia typhi (strain ATCC VR-144 / Wilmington).